A 311-amino-acid chain; its full sequence is 3-oxo-4,17-pregnadiene-20-carboxyl-CoA hydratase alpha subunit (311 aa).

A DUF35 region spans residues 198–295 (WDGVKAHELR…VAIGMPVRAT (98 aa)).

It belongs to the thioester dehydratase family. Heterodimer composed of ChsH1 and ChsH2. Two heterodimers combine to form a heterotetramer. The complex interacts with Ltp2 via the DUF35 C-terminal region of ChsH2. The ChsH1-ChsH2-Ltp2 protein complex is composed of two protomers that form a heterohexameric structure through the Ltp2 dimerization interface.

It carries out the reaction 3-oxochola-4,17-dien-22-oyl-CoA + H2O = 17-hydroxy-3-oxochol-4-en-22-oyl-CoA. The enzyme catalyses (2E)-octenoyl-CoA + H2O = 3-hydroxyoctanoyl-CoA. The catalysed reaction is (2E)-decenoyl-CoA + H2O = 3-hydroxydecanoyl-CoA. It participates in steroid metabolism; cholesterol degradation. Its activity is regulated as follows. In the absence of the Ltp2 aldolase, ChsH1/ChsH2 can hydrate only about 30% of the 3-OPDC-CoA substrate. Complete turnover requires the presence of Ltp2. Functionally, involved in cholesterol side chain degradation. Catalyzes the hydration of 3-oxo-4,17-pregnadiene-20-carboxyl-CoA (3-OPDC-CoA) to form 17-hydroxy-3-oxo-4-pregnene-20-carboxyl-CoA (17-HOPC-CoA), in the modified beta-oxidation pathway for cholesterol side chain degradation. Can also use octenoyl-CoA and decenoyl-CoA, with lower efficiency. This chain is 3-oxo-4,17-pregnadiene-20-carboxyl-CoA hydratase alpha subunit, found in Mycobacterium tuberculosis (strain ATCC 25618 / H37Rv).